The following is a 320-amino-acid chain: Foldase protein PrsA (320 aa).

Residues 1–20 form the signal peptide; it reads MKMINKLIVPVTASALLLGA. The N-palmitoyl cysteine moiety is linked to residue C21. C21 is lipidated: S-diacylglycerol cysteine. The PpiC domain maps to 139 to 245; that stretch reads EDSKKASHIL…FGYHIIKADK (107 aa). Residues 159-198 form a disordered region; that stretch reads EGLDDKEAKQKAEEIQKEVSKDPSKFGEIAKKESMDTGSA.

The protein belongs to the PrsA family.

Its subcellular location is the cell membrane. It carries out the reaction [protein]-peptidylproline (omega=180) = [protein]-peptidylproline (omega=0). In terms of biological role, plays a major role in protein secretion by helping the post-translocational extracellular folding of several secreted proteins. This is Foldase protein PrsA from Staphylococcus aureus (strain MRSA252).